Consider the following 184-residue polypeptide: Glutathione-regulated potassium-efflux system ancillary protein KefG (184 aa).

The protein belongs to the NAD(P)H dehydrogenase (quinone) family. KefG subfamily. As to quaternary structure, interacts with KefB.

The protein localises to the cell inner membrane. The enzyme catalyses a quinone + NADH + H(+) = a quinol + NAD(+). It catalyses the reaction a quinone + NADPH + H(+) = a quinol + NADP(+). Functionally, regulatory subunit of a potassium efflux system that confers protection against electrophiles. Required for full activity of KefB. The chain is Glutathione-regulated potassium-efflux system ancillary protein KefG from Cronobacter sakazakii (strain ATCC BAA-894) (Enterobacter sakazakii).